A 788-amino-acid polypeptide reads, in one-letter code: Protocadherin beta-18 (788 aa).

Residues Met1 to Ser28 form the signal peptide. 5 consecutive Cadherin domains span residues Glu29 to Phe133, Leu134 to Phe242, Glu243 to Ile347, Ala348 to Phe452, and Thr453 to Val562. The Extracellular segment spans residues Glu29–Leu691. N-linked (GlcNAc...) asparagine glycosylation is present at Asn169. Residues Asn419 and Asn437 are each glycosylated (N-linked (GlcNAc...) asparagine). Asn568 carries an N-linked (GlcNAc...) asparagine glycan. The Cadherin 6 domain maps to Gly569–Leu672. Residues Val692 to Val712 traverse the membrane as a helical segment. Residues Arg713–Phe788 lie on the Cytoplasmic side of the membrane.

It is found in the cell membrane. Its function is as follows. Potential calcium-dependent cell-adhesion protein. This Pan troglodytes (Chimpanzee) protein is Protocadherin beta-18 (PCDHB18).